Reading from the N-terminus, the 612-residue chain is Probable methyltransferase PMT9 (612 aa).

The Cytoplasmic portion of the chain corresponds to 1 to 14 (MKHFRTERVRATPK). The chain crosses the membrane as a helical; Signal-anchor for type II membrane protein span at residues 15–35 (LFTYVLVGFIALLGLTCLYYG). At 36 to 612 (SSFAPGSRKS…LWSLPAISVS (577 aa)) the chain is on the lumenal side. Residues asparagine 107, asparagine 383, and asparagine 562 are each glycosylated (N-linked (GlcNAc...) asparagine).

This sequence belongs to the methyltransferase superfamily.

It localises to the golgi apparatus membrane. In Arabidopsis thaliana (Mouse-ear cress), this protein is Probable methyltransferase PMT9.